A 315-amino-acid polypeptide reads, in one-letter code: MNFNHEPVMIEKTIELLKPESAQVIVDGTMGGAGHSLRIINSLPPEGILVGIDQDPDAYEAGKSLLEAYGNKAKVFNDNFVNIKHICERIGIHYVDGILLDLGVSSYQLDNKDRGFTYQENAPLDMRMDKSQKITASEVVNTYSEQKLAEIIREYGEEKWAQRIAQFIVQARQDQEINTTQELVKVIKAAIPKGARKSGPHPAKRTFQALRIHVNGELDSLRTAIQEGIRLLRGKGRFVVITFHSLEDRIVKQEFKKLAQTCVCPTKLPICQCKGEATVKLLTKKPLLPSQGEIEINPRARSAKLRAVERLGSNN.

Residues 33–35 (AGH), Asp53, Phe80, Asp101, and Gln108 contribute to the S-adenosyl-L-methionine site.

This sequence belongs to the methyltransferase superfamily. RsmH family.

It is found in the cytoplasm. It catalyses the reaction cytidine(1402) in 16S rRNA + S-adenosyl-L-methionine = N(4)-methylcytidine(1402) in 16S rRNA + S-adenosyl-L-homocysteine + H(+). In terms of biological role, specifically methylates the N4 position of cytidine in position 1402 (C1402) of 16S rRNA. The protein is Ribosomal RNA small subunit methyltransferase H of Natranaerobius thermophilus (strain ATCC BAA-1301 / DSM 18059 / JW/NM-WN-LF).